A 525-amino-acid chain; its full sequence is Bifunctional purine biosynthesis protein PurH (525 aa).

In terms of domain architecture, MGS-like spans 1 to 148 (MPSNNLIKNA…KNYKNVIVIV (148 aa)).

The protein belongs to the PurH family.

The enzyme catalyses (6R)-10-formyltetrahydrofolate + 5-amino-1-(5-phospho-beta-D-ribosyl)imidazole-4-carboxamide = 5-formamido-1-(5-phospho-D-ribosyl)imidazole-4-carboxamide + (6S)-5,6,7,8-tetrahydrofolate. The catalysed reaction is IMP + H2O = 5-formamido-1-(5-phospho-D-ribosyl)imidazole-4-carboxamide. It functions in the pathway purine metabolism; IMP biosynthesis via de novo pathway; 5-formamido-1-(5-phospho-D-ribosyl)imidazole-4-carboxamide from 5-amino-1-(5-phospho-D-ribosyl)imidazole-4-carboxamide (10-formyl THF route): step 1/1. Its pathway is purine metabolism; IMP biosynthesis via de novo pathway; IMP from 5-formamido-1-(5-phospho-D-ribosyl)imidazole-4-carboxamide: step 1/1. The polypeptide is Bifunctional purine biosynthesis protein PurH (Buchnera aphidicola subsp. Acyrthosiphon pisum (strain APS) (Acyrthosiphon pisum symbiotic bacterium)).